Here is a 539-residue protein sequence, read N- to C-terminus: Chaperonin GroEL 1 (539 aa).

Residues 29–32, 86–90, Gly-413, 478–480, and Asp-494 contribute to the ATP site; these read TLGP, DGTTT, and NAA.

This sequence belongs to the chaperonin (HSP60) family. As to quaternary structure, forms a cylinder of 14 subunits composed of two heptameric rings stacked back-to-back. Interacts with the co-chaperonin GroES.

It localises to the cytoplasm. The enzyme catalyses ATP + H2O + a folded polypeptide = ADP + phosphate + an unfolded polypeptide.. In terms of biological role, together with its co-chaperonin GroES, plays an essential role in assisting protein folding. The GroEL-GroES system forms a nano-cage that allows encapsulation of the non-native substrate proteins and provides a physical environment optimized to promote and accelerate protein folding. The sequence is that of Chaperonin GroEL 1 from Corynebacterium diphtheriae (strain ATCC 700971 / NCTC 13129 / Biotype gravis).